A 449-amino-acid chain; its full sequence is Na(+)/H(+) antiporter NhaA 1 (449 aa).

The next 11 membrane-spanning stretches (helical) occupy residues 38-58, 79-99, 117-137, 145-165, 175-195, 198-218, 240-260, 311-331, 347-367, 390-410, and 422-442; these read GILLALCAVAAMVWANSPWAA, FTIREFINDGLMTLFFFVVGM, VLPLIAAMGGMIVPAALYAAF, AGWAIPMATDIAFSIGCLTLV, VFLTALAIFDDIGGILVIALF, SGLHVSWLVGALGVLAVLACL, MHHGGIHATLSGVVLGLFMPA, FVHLWHVPVAYGIVPLFALAN, PLPLGIIAGLFVGKQVGIFLF, GVAVVAGIGFTVALFVAGLAF, and LGILVGSLLSAVVGYALLRFV.

Belongs to the NhaA Na(+)/H(+) (TC 2.A.33) antiporter family.

It localises to the cell inner membrane. The catalysed reaction is Na(+)(in) + 2 H(+)(out) = Na(+)(out) + 2 H(+)(in). Its function is as follows. Na(+)/H(+) antiporter that extrudes sodium in exchange for external protons. This is Na(+)/H(+) antiporter NhaA 1 from Myxococcus xanthus (strain DK1622).